Consider the following 456-residue polypeptide: Glutamate--tRNA ligase 1 (456 aa).

Positions 9–19 (PSPTGQIHIGN) match the 'HIGH' region motif. The short motif at 250 to 254 (GLSKR) is the 'KMSKS' region element. Residue Lys-253 coordinates ATP.

The protein belongs to the class-I aminoacyl-tRNA synthetase family. Glutamate--tRNA ligase type 1 subfamily. As to quaternary structure, monomer.

The protein localises to the cytoplasm. It catalyses the reaction tRNA(Glu) + L-glutamate + ATP = L-glutamyl-tRNA(Glu) + AMP + diphosphate. In terms of biological role, catalyzes the attachment of glutamate to tRNA(Glu) in a two-step reaction: glutamate is first activated by ATP to form Glu-AMP and then transferred to the acceptor end of tRNA(Glu). This is Glutamate--tRNA ligase 1 from Chelativorans sp. (strain BNC1).